The following is a 230-amino-acid chain: Glutathione S-transferase 2 (230 aa).

One can recognise a GST N-terminal domain in the interval Ala2–Arg86. The GST C-terminal domain maps to Asp93–His230.

It belongs to the GST superfamily.

The enzyme catalyses RX + glutathione = an S-substituted glutathione + a halide anion + H(+). Involved in the oxidative stress response and detoxification. In Schizosaccharomyces pombe (strain 972 / ATCC 24843) (Fission yeast), this protein is Glutathione S-transferase 2 (gst2).